We begin with the raw amino-acid sequence, 585 residues long: Mitochondrial translation ATP-dependent RNA helicase mrh5 (585 aa).

The Q motif motif lies at 87–117 (PKFHELPLNQNILDGLSTNFAEYKNSTPLQQ). Positions 121-351 (NALMKSGVSF…SRYITDQLGI (231 aa)) constitute a Helicase ATP-binding domain. 134-141 (GWNGSGKS) contacts ATP. Residues 261-264 (DESD) carry the DEAD box motif. Positions 390 to 584 (NLPYEFVRFN…PKSYEFDDEH (195 aa)) constitute a Helicase C-terminal domain.

This sequence belongs to the DEAD box helicase family. Component of the MRH5C complex, composed of mrh5, ppr4, mtf2, and sls1. Proteins mtf2 and sls1 form a subcomplex that serves as a scaffold to bring mrh5 and ppr4 together. The MRH5C complex associates with the small subunit of the mitochondrial ribosome.

It localises to the mitochondrion. The enzyme catalyses ATP + H2O = ADP + phosphate + H(+). In terms of biological role, translation activation factor that as part of the MRH5C complex specifically recruits cox1 mRNA to the mitochondrial ribosome for translation initiation. In Schizosaccharomyces pombe (strain 972 / ATCC 24843) (Fission yeast), this protein is Mitochondrial translation ATP-dependent RNA helicase mrh5.